Reading from the N-terminus, the 121-residue chain is Phospholipase A2 homolog ECO_00035 (121 aa).

7 disulfide bridges follow: Cys25-Cys114, Cys27-Cys43, Cys42-Cys94, Cys48-Cys121, Cys49-Cys87, Cys56-Cys80, and Cys74-Cys85. Positions 104–116 (KKYKIYPNILCRG) are important for membrane-damaging activities in eukaryotes and bacteria; heparin-binding.

This sequence belongs to the phospholipase A2 family. Group II subfamily. S49 sub-subfamily. As to quaternary structure, monomer. Expressed by the venom gland.

Its subcellular location is the secreted. Its function is as follows. Snake venom phospholipase A2 homolog that lacks enzymatic activity. Shows high myotoxin activities and displays edema-inducing activities. Has cytotoxic activities against HUVEC cells (LC(50)=4.9 uL) and human lung adenocarcinoma A549 cells (LC(50)=3.5 uL). The chain is Phospholipase A2 homolog ECO_00035 from Echis coloratus (Carpet viper).